We begin with the raw amino-acid sequence, 464 residues long: Glutathione reductase (464 aa).

FAD-binding residues include Ser-17 and Gly-18. Ser-17 lines the glutathione pocket. A glutathione-binding site is contributed by Arg-24. Positions 37, 45, 46, and 54 each coordinate FAD. The cysteines at positions 46 and 51 are disulfide-linked. Tyr-103 provides a ligand contact to glutathione. Ala-119 is a binding site for FAD. 6 residues coordinate NADP(+): Ala-186, Ile-189, Glu-192, Arg-209, Arg-215, and Gly-274. Residue Asp-315 coordinates FAD. Glu-321 contributes to the NADP(+) binding site. An FAD-binding site is contributed by Thr-323. Arg-331 lines the glutathione pocket. Val-354 contacts NADP(+). His-453 serves as a coordination point for FAD. The Proton acceptor role is filled by His-453.

This sequence belongs to the class-I pyridine nucleotide-disulfide oxidoreductase family. Homodimer. It depends on FAD as a cofactor.

It localises to the cytoplasm. The protein resides in the mitochondrion. The catalysed reaction is 2 glutathione + NADP(+) = glutathione disulfide + NADPH + H(+). Its function is as follows. Catalyzes the reduction of glutathione disulfide (GSSG) to reduced glutathione (GSH). Constitutes the major mechanism to maintain a high GSH:GSSG ratio in the cytosol. The protein is Glutathione reductase (pgr1) of Schizosaccharomyces pombe (strain 972 / ATCC 24843) (Fission yeast).